The chain runs to 292 residues: Glycine--tRNA ligase alpha subunit (292 aa).

Belongs to the class-II aminoacyl-tRNA synthetase family. Tetramer of two alpha and two beta subunits.

The protein resides in the cytoplasm. The catalysed reaction is tRNA(Gly) + glycine + ATP = glycyl-tRNA(Gly) + AMP + diphosphate. In Buchnera aphidicola subsp. Schizaphis graminum (strain Sg), this protein is Glycine--tRNA ligase alpha subunit.